The following is a 452-amino-acid chain: Bifunctional protein GlmU (452 aa).

The pyrophosphorylase stretch occupies residues 1–226 (MSLHIIILAA…LHEVEGVNNR (226 aa)). UDP-N-acetyl-alpha-D-glucosamine is bound by residues 8-11 (LAAG), Lys22, Gln73, 78-79 (GT), 100-102 (YGD), Gly136, Glu151, Asn166, and Asn224. Asp102 is a binding site for Mg(2+). Asn224 lines the Mg(2+) pocket. The segment at 227–247 (IQLAALERAYQQQVAEELMLA) is linker. The N-acetyltransferase stretch occupies residues 248-452 (GATLRDPARV…IDGWTRPVKK (205 aa)). UDP-N-acetyl-alpha-D-glucosamine-binding residues include Arg330 and Lys348. His360 serves as the catalytic Proton acceptor. Residues Tyr363 and Asn374 each contribute to the UDP-N-acetyl-alpha-D-glucosamine site. Acetyl-CoA contacts are provided by residues Ala377, 383 to 384 (NY), Ser402, Ala420, and Arg437.

This sequence in the N-terminal section; belongs to the N-acetylglucosamine-1-phosphate uridyltransferase family. The protein in the C-terminal section; belongs to the transferase hexapeptide repeat family. As to quaternary structure, homotrimer. Requires Mg(2+) as cofactor.

It localises to the cytoplasm. It carries out the reaction alpha-D-glucosamine 1-phosphate + acetyl-CoA = N-acetyl-alpha-D-glucosamine 1-phosphate + CoA + H(+). The enzyme catalyses N-acetyl-alpha-D-glucosamine 1-phosphate + UTP + H(+) = UDP-N-acetyl-alpha-D-glucosamine + diphosphate. It participates in nucleotide-sugar biosynthesis; UDP-N-acetyl-alpha-D-glucosamine biosynthesis; N-acetyl-alpha-D-glucosamine 1-phosphate from alpha-D-glucosamine 6-phosphate (route II): step 2/2. The protein operates within nucleotide-sugar biosynthesis; UDP-N-acetyl-alpha-D-glucosamine biosynthesis; UDP-N-acetyl-alpha-D-glucosamine from N-acetyl-alpha-D-glucosamine 1-phosphate: step 1/1. It functions in the pathway bacterial outer membrane biogenesis; LPS lipid A biosynthesis. In terms of biological role, catalyzes the last two sequential reactions in the de novo biosynthetic pathway for UDP-N-acetylglucosamine (UDP-GlcNAc). The C-terminal domain catalyzes the transfer of acetyl group from acetyl coenzyme A to glucosamine-1-phosphate (GlcN-1-P) to produce N-acetylglucosamine-1-phosphate (GlcNAc-1-P), which is converted into UDP-GlcNAc by the transfer of uridine 5-monophosphate (from uridine 5-triphosphate), a reaction catalyzed by the N-terminal domain. The polypeptide is Bifunctional protein GlmU (Hahella chejuensis (strain KCTC 2396)).